The following is a 432-amino-acid chain: Amino-acid acetyltransferase (432 aa).

Residues 286 to 425 (EVVREASIED…ASLYNYQRNS (140 aa)) form the N-acetyltransferase domain.

Belongs to the acetyltransferase family. ArgA subfamily.

It is found in the cytoplasm. The enzyme catalyses L-glutamate + acetyl-CoA = N-acetyl-L-glutamate + CoA + H(+). It functions in the pathway amino-acid biosynthesis; L-arginine biosynthesis; N(2)-acetyl-L-ornithine from L-glutamate: step 1/4. This chain is Amino-acid acetyltransferase, found in Pseudomonas putida (strain GB-1).